Here is a 469-residue protein sequence, read N- to C-terminus: Neuraminidase (469 aa).

At 1 to 9 (MNPNQKIIT) the chain is on the intravirion side. Residues 10-30 (IGSVSLTFAAICFLMQIAILV) traverse the membrane as a helical segment. The involved in apical transport and lipid raft association stretch occupies residues 11-33 (GSVSLTFAAICFLMQIAILVTTV). Residues 31-469 (TTVTLNFKQY…DGADINLMPI (439 aa)) lie on the Virion surface side of the membrane. Residues 36-88 (NFKQYECDPPATNQVMPCEPIIIERNITEIVYLTNTTIEREICPKLVEYRNWS) form a hypervariable stalk region region. Residues asparagine 61, asparagine 70, and asparagine 86 are each glycosylated (N-linked (GlcNAc...) asparagine; by host). The interval 91-469 (QCKITGFAPF…DGADINLMPI (379 aa)) is head of neuraminidase. Disulfide bonds link cysteine 92–cysteine 417, cysteine 124–cysteine 129, cysteine 183–cysteine 230, cysteine 232–cysteine 237, cysteine 278–cysteine 291, cysteine 280–cysteine 289, cysteine 318–cysteine 337, and cysteine 421–cysteine 447. Position 118 (arginine 118) interacts with substrate. A glycan (N-linked (GlcNAc...) asparagine; by host) is linked at asparagine 146. The active-site Proton donor/acceptor is aspartate 151. Residue arginine 152 participates in substrate binding. Asparagine 200 and asparagine 234 each carry an N-linked (GlcNAc...) asparagine; by host glycan. 276 to 277 (EE) lines the substrate pocket. Arginine 292 contacts substrate. Residues aspartate 293 and glycine 297 each contribute to the Ca(2+) site. N-linked (GlcNAc...) asparagine; by host glycosylation occurs at asparagine 313. Aspartate 324 is a binding site for Ca(2+). Arginine 371 provides a ligand contact to substrate. Residue asparagine 402 is glycosylated (N-linked (GlcNAc...) asparagine; by host). The Nucleophile role is filled by tyrosine 406.

Belongs to the glycosyl hydrolase 34 family. As to quaternary structure, homotetramer. Ca(2+) is required as a cofactor. Post-translationally, N-glycosylated.

It localises to the virion membrane. The protein resides in the host apical cell membrane. The enzyme catalyses Hydrolysis of alpha-(2-&gt;3)-, alpha-(2-&gt;6)-, alpha-(2-&gt;8)- glycosidic linkages of terminal sialic acid residues in oligosaccharides, glycoproteins, glycolipids, colominic acid and synthetic substrates.. Inhibited by the neuraminidase inhibitors zanamivir (Relenza) and oseltamivir (Tamiflu). These drugs interfere with the release of progeny virus from infected cells and are effective against all influenza strains. Resistance to neuraminidase inhibitors is quite rare. Catalyzes the removal of terminal sialic acid residues from viral and cellular glycoconjugates. Cleaves off the terminal sialic acids on the glycosylated HA during virus budding to facilitate virus release. Additionally helps virus spread through the circulation by further removing sialic acids from the cell surface. These cleavages prevent self-aggregation and ensure the efficient spread of the progeny virus from cell to cell. Otherwise, infection would be limited to one round of replication. Described as a receptor-destroying enzyme because it cleaves a terminal sialic acid from the cellular receptors. May facilitate viral invasion of the upper airways by cleaving the sialic acid moieties on the mucin of the airway epithelial cells. Likely to plays a role in the budding process through its association with lipid rafts during intracellular transport. May additionally display a raft-association independent effect on budding. Plays a role in the determination of host range restriction on replication and virulence. Sialidase activity in late endosome/lysosome traffic seems to enhance virus replication. In Influenza A virus (strain A/Swine/Kanagawa/2/1978 H1N2), this protein is Neuraminidase.